A 218-amino-acid polypeptide reads, in one-letter code: Small ribosomal subunit protein uS3c (218 aa).

Residues 39–120 (IRNFMNKELL…IITCKVVGVT (82 aa)) enclose the KH type-2 domain.

This sequence belongs to the universal ribosomal protein uS3 family. As to quaternary structure, part of the 30S ribosomal subunit.

Its subcellular location is the plastid. The protein resides in the chloroplast. The sequence is that of Small ribosomal subunit protein uS3c (rps3) from Euglena gracilis.